Consider the following 396-residue polypeptide: 1-deoxy-D-xylulose 5-phosphate reductoisomerase (396 aa).

Positions 15, 16, 17, 18, 41, and 129 each coordinate NADPH. Residue K130 participates in 1-deoxy-D-xylulose 5-phosphate binding. E131 contacts NADPH. A Mn(2+)-binding site is contributed by D155. 4 residues coordinate 1-deoxy-D-xylulose 5-phosphate: S156, E157, S182, and H205. E157 is a Mn(2+) binding site. G211 is an NADPH binding site. 1-deoxy-D-xylulose 5-phosphate-binding residues include S218, N223, K224, and E227. Residue E227 coordinates Mn(2+).

The protein belongs to the DXR family. Mg(2+) serves as cofactor. Requires Mn(2+) as cofactor.

It catalyses the reaction 2-C-methyl-D-erythritol 4-phosphate + NADP(+) = 1-deoxy-D-xylulose 5-phosphate + NADPH + H(+). Its pathway is isoprenoid biosynthesis; isopentenyl diphosphate biosynthesis via DXP pathway; isopentenyl diphosphate from 1-deoxy-D-xylulose 5-phosphate: step 1/6. Catalyzes the NADPH-dependent rearrangement and reduction of 1-deoxy-D-xylulose-5-phosphate (DXP) to 2-C-methyl-D-erythritol 4-phosphate (MEP). This Xanthomonas euvesicatoria pv. vesicatoria (strain 85-10) (Xanthomonas campestris pv. vesicatoria) protein is 1-deoxy-D-xylulose 5-phosphate reductoisomerase.